The primary structure comprises 534 residues: Kelch repeat and BTB domain-containing protein 4 (534 aa).

The region spanning 61–128 (ADVTISVEGR…IYHGTVKLRA (68 aa)) is the BTB domain. In terms of domain architecture, BACK spans 163–255 (CLQVMWLADR…SLKEIGENVH (93 aa)). Kelch repeat units lie at residues 255-301 (HIYL…KHGG), 302-344 (DLYV…SVPG), 347-394 (AIYS…NLNG), 396-446 (IYLL…VHKD), and 448-497 (VFIV…VFRD).

In terms of assembly, component of the BCR(KBTBD4) E3 ubiquitin ligase complex, at least composed of CUL3, KBTBD4 and RBX1.

Its function is as follows. Substrate-specific adapter of a BCR (BTB-CUL3-RBX1) E3 ubiquitin ligase complex which targets CoREST corepressor complex components RCOR1, KDM1A/LSD1 and HDAC2 for proteasomal degradation. RCOR1 is likely to be the primary target while degradation of KDM1A and HDAC2 is likely due to their association with RCOR1. Also targets RCOR3, MIER2 and MIER3 for proteasomal degradation as well as associated proteins ZNF217 and RREB1. Degradation is dependent on the presence of an ELM2 domain in the target proteins. The chain is Kelch repeat and BTB domain-containing protein 4 (Kbtbd4) from Mus musculus (Mouse).